A 373-amino-acid polypeptide reads, in one-letter code: Histone-lysine N-methyltransferase SETD7 (373 aa).

A disordered region spans residues 1–20; sequence MDSDDDNMEEVVEGPLDEDD. 3 MORN repeats span residues 36 to 58, 59 to 81, and 106 to 128; these read FEGH…DGST, LEGF…DGGA, and FRGR…DGAC. In terms of domain architecture, SET spans 214 to 336; that stretch reads QRVYVGQSLI…KDEELTVAYG (123 aa). S-adenosyl-L-methionine-binding positions include 226–228, asparagine 296, and histidine 297; that span reads AGE.

This sequence belongs to the class V-like SAM-binding methyltransferase superfamily. Histone-lysine methyltransferase family. SET7 subfamily.

It localises to the nucleus. The protein localises to the chromosome. The enzyme catalyses L-lysyl(4)-[histone H3] + S-adenosyl-L-methionine = N(6)-methyl-L-lysyl(4)-[histone H3] + S-adenosyl-L-homocysteine + H(+). It catalyses the reaction L-lysyl-[protein] + S-adenosyl-L-methionine = N(6)-methyl-L-lysyl-[protein] + S-adenosyl-L-homocysteine + H(+). Its function is as follows. Histone methyltransferase that specifically monomethylates 'Lys-4' of histone H3. H3 'Lys-4' methylation represents a specific tag for epigenetic transcriptional activation. Plays a central role in the transcriptional activation of genes. Also has methyltransferase activity toward non-histone proteins. This chain is Histone-lysine N-methyltransferase SETD7 (setd7), found in Danio rerio (Zebrafish).